An 83-amino-acid polypeptide reads, in one-letter code: Three-finger toxin MALT0052C (83 aa).

An N-terminal signal peptide occupies residues 1–21; the sequence is MKTLLLTLVVVTIVCLDFGHT. 4 disulfide bridges follow: Cys24/Cys45, Cys38/Cys62, Cys64/Cys75, and Cys76/Cys81.

The protein belongs to the three-finger toxin family. Short-chain subfamily. Type I alpha-neurotoxin sub-subfamily. Expressed by the venom gland.

It localises to the secreted. Functionally, binds to muscle nicotinic acetylcholine receptor (nAChR) and inhibit acetylcholine from binding to the receptor, thereby impairing neuromuscular transmission. This is Three-finger toxin MALT0052C from Micrurus altirostris (Uruguayan coral snake).